The sequence spans 45 residues: Toxin Bcs III 15.09 (45 aa).

Residues 2–44 (QGTACTGEHAHNFCLNGGTCRHIQSLGEYYCICPEGYTGHRCE) enclose the EGF-like domain. Cystine bridges form between C6–C21, C15–C32, and C34–C43.

The protein localises to the secreted. The protein resides in the nematocyst. Functionally, has both toxic and EGF activity. This chain is Toxin Bcs III 15.09, found in Bunodosoma caissarum (Sea anemone).